The sequence spans 2531 residues: Neurogenic locus notch homolog protein 1 (2531 aa).

The first 18 residues, 1–18 (MPRLLAPLLCLTLLPALA), serve as a signal peptide directing secretion. At 19–1725 (ARGLRCSQPS…VEPPLPSQLH (1707 aa)) the chain is on the extracellular side. 4 EGF-like domains span residues 20–58 (RGLR…QRCQ), 59–99 (DPSP…PLCL), 102–139 (LANA…KSCQ), and 140–176 (QADP…PTCR). Intrachain disulfides connect Cys-24–Cys-37, Cys-31–Cys-46, Cys-48–Cys-57, Cys-63–Cys-74, Cys-68–Cys-87, Cys-89–Cys-98, Cys-106–Cys-117, Cys-111–Cys-127, Cys-129–Cys-138, Cys-144–Cys-155, Cys-149–Cys-164, Cys-166–Cys-175, Cys-182–Cys-195, Cys-189–Cys-204, Cys-206–Cys-215, Cys-222–Cys-233, Cys-227–Cys-243, Cys-245–Cys-254, Cys-261–Cys-272, Cys-266–Cys-281, Cys-283–Cys-292, Cys-299–Cys-312, Cys-306–Cys-321, Cys-323–Cys-332, Cys-339–Cys-350, Cys-344–Cys-359, Cys-361–Cys-370, Cys-376–Cys-387, Cys-381–Cys-398, Cys-400–Cys-409, Cys-416–Cys-429, Cys-423–Cys-438, and Cys-440–Cys-449. Asn-41 is a glycosylation site (N-linked (GlcNAc...) asparagine). Ser-65 carries an O-linked (Glc...) serine glycan. Residue Thr-73 is glycosylated (O-linked (Fuc...) threonine). O-linked (Fuc...) threonine glycosylation occurs at Thr-116. Ser-146 carries O-linked (Glc...) serine glycosylation. Residues 178–216 (DVNECSQNPGLCRHGGTCHNEIGSYRCACRATHTGPHCE) form the EGF-like 5; calcium-binding domain. An O-linked (Fuc...) threonine glycan is attached at Thr-194. An EGF-like 6 domain is found at 218–255 (PYVPCSPSPCQNGGTCRPTGDTTHECACLPGFAGQNCE). A glycan (O-linked (Fuc...) threonine; alternate) is linked at Thr-232. O-linked (GalNAc...) threonine; alternate glycosylation occurs at Thr-232. The EGF-like 7; calcium-binding domain occupies 257 to 293 (NVDDCPGNNCKNGGACVDGVNTYNCRCPPEWTGQYCT). One can recognise an EGF-like 8; calcium-binding domain in the interval 295 to 333 (DVDECQLMPNACQNGGTCHNSHGGYNCVCVNGWTGEDCS). An O-linked (Fuc...) threonine glycan is attached at Thr-311. The EGF-like 9; calcium-binding domain maps to 335–371 (NIDDCASAACFQGATCHDRVASFYCECPHGRTGLLCH). Ser-341 carries an O-linked (Glc...) serine glycan. Thr-349 is a glycosylation site (O-linked (Fuc...) threonine). The EGF-like 10 domain occupies 372–410 (LNDACISNPCNEGSNCDTNPVNGKAICTCPSGYTGPACS). O-linked (Glc...) serine glycosylation is present at Ser-378. One can recognise an EGF-like 11; calcium-binding domain in the interval 412–450 (DVDECALGANPCEHAGKCLNTLGSFECQCLQGYTGPRCE). The interval 420 to 421 (AN) is interaction with DLL4. Residues Thr-432 and Ser-435 each coordinate Ca(2+). Ser-435 is a glycosylation site (O-linked (Glc...) serine). Residues 448 to 452 (RCEID) form an interaction with DLL4 region. Positions 452, 453, and 455 each coordinate Ca(2+). The EGF-like 12; calcium-binding domain maps to 452-488 (DVNECISNPCQNDATCLDQIGEFQCICMPGYEGVYCE). Intrachain disulfides connect Cys-456–Cys-467, Cys-461–Cys-476, and Cys-478–Cys-487. Residue Ser-458 is glycosylated (O-linked (Glc...) serine). An O-linked (Fuc...) threonine glycan is attached at Thr-466. Residues Asp-469 and Gln-470 each contribute to the Ca(2+) site. Residues Asn-490, Thr-491, and Glu-493 each contribute to the Ca(2+) site. The EGF-like 13; calcium-binding domain maps to 490 to 526 (NTDECASSPCLHNGRCVDKINEFLCQCPKGFSGHLCQ). 75 disulfides stabilise this stretch: Cys-494–Cys-505, Cys-499–Cys-514, Cys-516–Cys-525, Cys-532–Cys-543, Cys-537–Cys-552, Cys-554–Cys-563, Cys-570–Cys-580, Cys-575–Cys-589, Cys-591–Cys-600, Cys-607–Cys-618, Cys-612–Cys-627, Cys-629–Cys-638, Cys-645–Cys-655, Cys-650–Cys-664, Cys-666–Cys-675, Cys-682–Cys-693, Cys-687–Cys-702, Cys-704–Cys-713, Cys-720–Cys-730, Cys-725–Cys-739, Cys-741–Cys-750, Cys-757–Cys-768, Cys-762–Cys-777, Cys-779–Cys-788, Cys-795–Cys-806, Cys-800–Cys-815, Cys-817–Cys-826, Cys-833–Cys-844, Cys-838–Cys-855, Cys-857–Cys-866, Cys-873–Cys-884, Cys-878–Cys-893, Cys-895–Cys-904, Cys-911–Cys-922, Cys-916–Cys-931, Cys-933–Cys-942, Cys-949–Cys-960, Cys-954–Cys-969, Cys-971–Cys-980, Cys-987–Cys-998, Cys-992–Cys-1007, Cys-1009–Cys-1018, Cys-1025–Cys-1036, Cys-1030–Cys-1045, Cys-1047–Cys-1056, Cys-1063–Cys-1074, Cys-1068–Cys-1083, Cys-1085–Cys-1094, Cys-1101–Cys-1122, Cys-1116–Cys-1131, Cys-1133–Cys-1142, Cys-1149–Cys-1160, Cys-1154–Cys-1169, Cys-1171–Cys-1180, Cys-1187–Cys-1198, Cys-1192–Cys-1207, Cys-1209–Cys-1218, Cys-1225–Cys-1244, Cys-1238–Cys-1253, Cys-1255–Cys-1264, Cys-1271–Cys-1284, Cys-1276–Cys-1293, Cys-1295–Cys-1304, Cys-1311–Cys-1322, Cys-1316–Cys-1334, Cys-1336–Cys-1345, Cys-1352–Cys-1363, Cys-1357–Cys-1372, Cys-1374–Cys-1383, Cys-1391–Cys-1403, Cys-1397–Cys-1414, Cys-1416–Cys-1425, Cys-1449–Cys-1472, Cys-1454–Cys-1467, and Cys-1463–Cys-1479. Ser-496 carries an O-linked (Glc...) serine glycan. Positions 507 and 508 each coordinate Ca(2+). The EGF-like 14; calcium-binding domain occupies 528-564 (DVDECASTPCKNGAKCLDGPNTYTCVCTEGYTGTHCE). The O-linked (Glc...) serine glycan is linked to Ser-534. In terms of domain architecture, EGF-like 15; calcium-binding spans 566-601 (DIDECDPDPCHYGLCKDGVATFTCLCQPGYTGHHCE). The EGF-like 16; calcium-binding domain maps to 603–639 (NINECHSQPCRHGGTCQDRDNYYLCLCLKGTTGPNCE). An O-linked (Glc...) serine glycan is attached at Ser-609. Residue Thr-617 is glycosylated (O-linked (Fuc...) threonine). The EGF-like 17; calcium-binding domain maps to 641–676 (NLDDCASNPCDSGTCLDKIDGYECACEPGYTGSMCN). O-linked (Glc...) serine glycosylation is present at Ser-647. The 37-residue stretch at 678–714 (NIDECAGSPCHNGGTCEDGIAGFTCRCPEGYHDPTCL) folds into the EGF-like 18; calcium-binding domain. O-linked (Fuc...) threonine glycosylation occurs at Thr-692. In terms of domain architecture, EGF-like 19; calcium-binding spans 716-751 (EVNECNSNPCIHGACRDGLNGYKCDCAPGWSGTNCD). The O-linked (Glc...) serine glycan is linked to Ser-722. One can recognise an EGF-like 20; calcium-binding domain in the interval 753-789 (NNNECESNPCVNGGTCKDMTSGYVCTCREGFSGPNCQ). O-linked (Glc...) serine glycosylation occurs at Ser-759. An O-linked (Fuc...) threonine glycan is attached at Thr-767. Ser-784 is a glycosylation site (O-linked (GlcNAc) serine). An EGF-like 21; calcium-binding domain is found at 791-827 (NINECASNPCLNQGTCIDDVAGYKCNCPLPYTGATCE). An O-linked (Glc...) serine glycan is attached at Ser-797. O-linked (Fuc...) threonine glycosylation is present at Thr-805. In terms of domain architecture, EGF-like 22 spans 829–867 (VLAPCATSPCKNSGVCKESEDYESFSCVCPTGWQGQTCE). An EGF-like 23; calcium-binding domain is found at 869 to 905 (DINECVKSPCRHGASCQNTNGSYRCLCQAGYTGRNCE). Asn-888 carries an N-linked (GlcNAc...) asparagine glycan. O-linked (GlcNAc) threonine glycosylation occurs at Thr-900. Residues 907-943 (DIDDCRPNPCHNGGSCTDGVNAAFCDCLPGFQGAFCE) enclose the EGF-like 24 domain. O-linked (Fuc) serine glycosylation is present at Ser-921. Positions 945 to 981 (DINECASNPCQNGANCTDCVDSYTCTCPTGFNGIHCE) constitute an EGF-like 25; calcium-binding domain. Ser-951 is a glycosylation site (O-linked (Glc...) serine). An N-linked (GlcNAc...) asparagine glycan is attached at Asn-959. One can recognise an EGF-like 26 domain in the interval 983–1019 (NTPDCTESSCFNGGTCVDGINSFTCLCPPGFTGSYCQ). The O-linked (Fuc...) threonine glycan is linked to Thr-997. Residues 1021–1057 (DVNECDSRPCLHGGTCQDSYGTYKCTCPQGYTGLNCQ) form the EGF-like 27; calcium-binding domain. Ser-1027 carries an O-linked (Glc...) serine glycan. Thr-1035 carries an O-linked (Fuc...) threonine glycan. EGF-like domains are found at residues 1059–1095 (LVRW…FNCD) and 1097–1143 (LSVS…SYCE). O-linked (Glc...) serine glycosylation occurs at Ser-1065. Positions 1145-1181 (EVDECSPNPCQNGATCTDYLGGFSCKCVAGYHGSNCS) constitute an EGF-like 30; calcium-binding domain. Thr-1159 carries an O-linked (Fuc...) threonine glycan. Residue Asn-1179 is glycosylated (N-linked (GlcNAc...) asparagine). The EGF-like 31; calcium-binding domain occupies 1183–1219 (EINECLSQPCQNGGTCIDLTNTYKCSCPRGTQGVHCE). The O-linked (Glc...) serine glycan is linked to Ser-1189. Thr-1197 carries O-linked (Fuc...) threonine glycosylation. An EGF-like 32; calcium-binding domain is found at 1221–1265 (NVDDCHPPLDPASRSPKCFNNGTCVDQVGGYTCTCPPGFVGERCE). The N-linked (GlcNAc...) asparagine glycan is linked to Asn-1241. 4 consecutive EGF-like domains span residues 1267-1305 (DVNE…RRCE), 1307-1346 (VING…ATCE), 1348-1384 (DART…PECQ), and 1387-1426 (ASSP…LLCH). Ser-1273 carries O-linked (Glc...) serine glycosylation. Thr-1362 is a glycosylation site (O-linked (Fuc...) threonine). Residue Thr-1379 is glycosylated (O-linked (GlcNAc...) threonine). Thr-1402 is a glycosylation site (O-linked (Fuc...) threonine; alternate). The O-linked (GalNAc...) threonine; alternate glycan is linked to Thr-1402. LNR repeat units lie at residues 1449-1489 (CELP…PWKN), 1490-1531 (CTQS…CNPL), and 1532-1571 (YDQY…RLAA). 4 residues coordinate Ca(2+): Asp-1457, Asn-1460, Asp-1475, and Asp-1478. Residue Asn-1489 is glycosylated (N-linked (GlcNAc...) asparagine). 5 disulfide bridges follow: Cys-1490–Cys-1514, Cys-1496–Cys-1509, Cys-1505–Cys-1521, Cys-1536–Cys-1549, and Cys-1545–Cys-1561. N-linked (GlcNAc...) asparagine glycosylation occurs at Asn-1587. O-linked (GalNAc...) threonine glycosylation occurs at Thr-1715. The segment at 1718–1750 (PPLPSQLHLMYVAAAAFVLLFFVGCGVLLSRKR) is interaction with PSEN1. The helical transmembrane segment at 1726–1746 (LMYVAAAAFVLLFFVGCGVLL) threads the bilayer. The Cytoplasmic segment spans residues 1747–2531 (SRKRRRQHGQ…QITHIPEAFK (785 aa)). Lys-1749 is covalently cross-linked (Glycyl lysine isopeptide (Lys-Gly) (interchain with G-Cter in ubiquitin)). The disordered stretch occupies residues 1770–1798 (KKKRREPLGEDSVGLKPLKNASDGALMDD). Thr-1851 is subject to Phosphothreonine. ANK repeat units follow at residues 1917–1946 (TGET…DANI), 1950–1980 (MGRT…DLDA), 1984–2013 (DGTT…DVNA), 2017–2046 (LGKS…NKDM), and 2050–2079 (KEET…NRDI). Residues 1937 to 1945 (LLEASADAN) form an HIF1AN-binding region. A (3S)-3-hydroxyasparagine; by HIF1AN modification is found at Asn-1945. Positions 2004 to 2012 (LINSHADVN) are HIF1AN-binding. Asn-2012 carries the (3S)-3-hydroxyasparagine; by HIF1AN modification. 3 disordered regions span residues 2141–2185 (SATQ…DSSS), 2382–2428 (QPQN…SLPV), and 2440–2531 (PTSL…EAFK). The span at 2382–2395 (QPQNLQPPSQPHLS) shows a compositional bias: low complexity. A compositionally biased stretch (polar residues) spans 2440–2478 (PTSLPSSMVPPMTTTQFLTPPSQHSYSSSPVDNTPSHQL). Residues 2488–2503 (PSPESPDQWSSSSPHS) are compositionally biased toward low complexity. A compositionally biased stretch (polar residues) spans 2504–2524 (NISDWSEGISSPPTSMPSQIT).

Belongs to the NOTCH family. As to quaternary structure, heterodimer of a C-terminal fragment N(TM) and an N-terminal fragment N(EC) which are probably linked by disulfide bonds. Interacts with DNER, DTX1, DTX2 and RBPJ/RBPSUH. Also interacts with MAML1, MAML2 and MAML3 which act as transcriptional coactivators for NOTCH1. Notch 1 intracellular domain interacts with SNW1; the interaction involves multimerized NOTCH1 NICD and is implicated in a formation of an intermediate preactivation complex which associates with DNA-bound CBF-1/RBPJ. The activated membrane-bound form interacts with AAK1 which promotes NOTCH1 stabilization. Forms a trimeric complex with FBXW7 and SGK1. Interacts with HIF1AN. HIF1AN negatively regulates the function of notch intracellular domain (NICD), accelerating myogenic differentiation. Interacts (via NICD) with SNAI1 (via zinc fingers); the interaction induces SNAI1 degradation via MDM2-mediated ubiquitination and inhibits SNAI1-induced cell invasion. Interacts (via NICD) with MDM2A. Interacts (via NICD) with BCL6; the interaction decreases MAML1 recruitment by NOTCH1 NICD on target genes DNA and inhibits NOTCH1 transactivation activity. Interacts with THBS4. Interacts (via the EGF-like repeat region) with CCN3 (via CTCK domain). Interacts (via EGF-like domains) with DLL4 (via N-terminal DSL and MNNL domains). Interacts with ZMIZ1. Interacts (via NICD domain) with MEGF10 (via the cytoplasmic domain). Interacts with DLL1 and JAG1. Interacts (via NICD domain) with PRAG1. Forms a complex with PRAG1, N1ICD and MAML1, in a MAML1-dependent manner. Interacts (via transmembrane region) with PSEN1; the interaction is direct. Interacts with ZFP64. Synthesized in the endoplasmic reticulum as an inactive form which is proteolytically cleaved by a furin-like convertase in the trans-Golgi network before it reaches the plasma membrane to yield an active, ligand-accessible form. Cleavage results in a C-terminal fragment N(TM) and a N-terminal fragment N(EC). Following ligand binding, it is cleaved by ADAM17 to yield a membrane-associated intermediate fragment called notch extracellular truncation (NEXT). Following endocytosis, this fragment is then cleaved by one of the catalytic subunits of gamma-secretase (PSEN1 or PSEN2) to release a Notch-derived peptide containing the intracellular domain (NICD) from the membrane. In terms of processing, phosphorylated. Post-translationally, O-glycosylated on the EGF-like domains. O-glucosylated at Ser-435 by KDELC1 and KDELC2. Contains both O-linked fucose and O-linked glucose in the EGF-like domains 11, 12 and 13, which are interacting with the residues on DLL4. O-linked glycosylation by GALNT11 is involved in determination of left/right symmetry: glycosylation promotes activation of NOTCH1, possibly by promoting cleavage by ADAM17, modulating the balance between motile and immotile (sensory) cilia at the left-right organiser (LRO). MFNG-, RFNG- and LFNG-mediated modification of O-fucose residues at specific EGF-like domains results in inhibition of its activation by JAG1 and enhancement of its activation by DLL1 via an increased binding to DLL1. Ubiquitinated. Undergoes 'Lys-29'-linked polyubiquitination by ITCH; promotes the lysosomal degradation of non-activated internalized NOTCH1. Deubiquitination by USP12 is required for transport of internalized non-activated receptor from late endosomes to lysosomes for degradation. Monoubiquitination at Lys-1749 is required for activation by gamma-secretase cleavage, it promotes interaction with AAK1, which stabilizes it. Deubiquitination by EIF3F is necessary for nuclear import of activated Notch. In terms of processing, hydroxylated at Asn-1945 and Asn-2012 by HIF1AN. Hydroxylation reduces affinity for HI1AN and may thus indirectly modulate negative regulation of NICD. Expressed in the brain, kidney and spleen. Expressed in postnatal central nervous system (CNS) germinal zones and, in early postnatal life, within numerous cells throughout the CNS. Found in both subventricular and ventricular germinal zones.

It is found in the cell membrane. It localises to the late endosome membrane. Its subcellular location is the nucleus. Functionally, functions as a receptor for membrane-bound ligands Jagged-1 (JAG1), Jagged-2 (JAG2) and Delta-1 (DLL1) to regulate cell-fate determination. Upon ligand activation through the released notch intracellular domain (NICD) it forms a transcriptional activator complex with RBPJ/RBPSUH and activates genes of the enhancer of split locus. Affects the implementation of differentiation, proliferation and apoptotic programs. Involved in angiogenesis; negatively regulates endothelial cell proliferation and migration and angiogenic sprouting. Involved in the maturation of both CD4(+) and CD8(+) cells in the thymus. Important for follicular differentiation and possibly cell fate selection within the follicle. During cerebellar development, functions as a receptor for neuronal DNER and is involved in the differentiation of Bergmann glia. Represses neuronal and myogenic differentiation. May play an essential role in postimplantation development, probably in some aspect of cell specification and/or differentiation. May be involved in mesoderm development, somite formation and neurogenesis. May enhance HIF1A function by sequestering HIF1AN away from HIF1A. Required for the THBS4 function in regulating protective astrogenesis from the subventricular zone (SVZ) niche after injury. Involved in determination of left/right symmetry by modulating the balance between motile and immotile (sensory) cilia at the left-right organiser (LRO). This is Neurogenic locus notch homolog protein 1 (Notch1) from Rattus norvegicus (Rat).